The primary structure comprises 220 residues: MLQLAGVSNSTCGGVRNVSVETRNVKPQGKDSKAEENGSHSFMHSMDPQLERQMETTQNLVDSYMAIVNKTVWDLMVGAKPKTTMHIMIYNVHAPPHGDQGVHLLGAAVQPALAWEREDTHGGVGRVGTAARRDAASQSCCPTCTRLGTRRHSWRSRQSRHSGATRLAWEEIDTPGGVGRAGTAARRDSRGNEKTLLEESAEQADQGVHLLGAAVQPALA.

Positions 18 to 46 are disordered; sequence VSVETRNVKPQGKDSKAEENGSHSFMHSM. Residues 28 to 38 are compositionally biased toward basic and acidic residues; it reads QGKDSKAEENG. Residues 54 to 149 enclose the GED domain; sequence METTQNLVDS…CCPTCTRLGT (96 aa). The segment at 173 to 194 is disordered; sequence DTPGGVGRAGTAARRDSRGNEK. The segment covering 185-194 has biased composition (basic and acidic residues); sequence ARRDSRGNEK.

The chain is Putative GED domain-containing protein DNM1P46 (DNM1P46) from Homo sapiens (Human).